The primary structure comprises 796 residues: Protocadherin beta-3 (796 aa).

An N-terminal signal peptide occupies residues 1–26; sequence MEAGGERFLRQRQVLLLFVFLGGSLA. Topologically, residues 27 to 690 are extracellular; sequence GSESRRYSVA…AQADLLTVYL (664 aa). Cadherin domains are found at residues 35-133, 138-242, 247-347, 352-451, and 456-561; these read VAEE…SPVF, MHLK…APEF, YEVA…PPEL, VNSP…APAF, and YTLF…SPFV. Asn-169 carries N-linked (GlcNAc...) asparagine glycosylation. Residues Asn-418 and Asn-436 are each glycosylated (N-linked (GlcNAc...) asparagine). Asn-567 carries an N-linked (GlcNAc...) asparagine glycan. Residues 568-671 enclose the Cadherin 6 domain; that stretch reads GSAPCTELVP…LVDGFSQPYL (104 aa). A helical transmembrane segment spans residues 691-711; that stretch reads VVALASVSSLFLFSVLLFVAV. Residues 712–796 lie on the Cytoplasmic side of the membrane; that stretch reads RLCRRSRAAS…PSFRKSFEFS (85 aa).

The protein resides in the cell membrane. Functionally, potential calcium-dependent cell-adhesion protein. May be involved in the establishment and maintenance of specific neuronal connections in the brain. This chain is Protocadherin beta-3 (PCDHB3), found in Pan troglodytes (Chimpanzee).